Here is a 732-residue protein sequence, read N- to C-terminus: Catalase-peroxidase (732 aa).

The interval 1-21 (MSMAEMRCPFSGHGAATTPAS) is disordered. An N-terminal signal peptide occupies residues 1 to 22 (MSMAEMRCPFSGHGAATTPASA). The segment at residues 97-220 (WHSAGTYRLA…LAATEMGLIY (124 aa)) is a cross-link (tryptophyl-tyrosyl-methioninium (Trp-Tyr) (with M-246)). The Proton acceptor role is filled by histidine 98. Positions 220–246 (YVNPEGPHGEPDPVASGREVRDTFARM) form a cross-link, tryptophyl-tyrosyl-methioninium (Tyr-Met) (with W-97). Histidine 261 serves as a coordination point for heme b.

It belongs to the peroxidase family. Peroxidase/catalase subfamily. In terms of assembly, homodimer or homotetramer. Heme b serves as cofactor. Post-translationally, formation of the three residue Trp-Tyr-Met cross-link is important for the catalase, but not the peroxidase activity of the enzyme.

It catalyses the reaction H2O2 + AH2 = A + 2 H2O. The enzyme catalyses 2 H2O2 = O2 + 2 H2O. Its function is as follows. Bifunctional enzyme with both catalase and broad-spectrum peroxidase activity. This chain is Catalase-peroxidase, found in Synechococcus sp. (strain RCC307).